Reading from the N-terminus, the 600-residue chain is Netrin-1 (600 aa).

The signal sequence occupies residues 1 to 24 (MMRAMWEALAALAAVSCLVGAVRG). The 238-residue stretch at 47 to 284 (HPRRCIPDFV…AVSDLQVGGR (238 aa)) folds into the Laminin N-terminal domain. N-linked (GlcNAc...) asparagine glycosylation is found at N95, N116, and N131. 14 cysteine pairs are disulfide-bonded: C119-C152, C285-C294, C287-C304, C306-C315, C318-C338, C341-C350, C343-C368, C371-C380, C383-C401, C404-C416, C406-C423, C425-C434, C437-C451, and C472-C544. Laminin EGF-like domains follow at residues 285 to 340 (CKCN…ECVA), 341 to 403 (CNCN…ACKA), and 404 to 453 (CDCH…PCIK). Residue N417 is glycosylated (N-linked (GlcNAc...) asparagine). An NTR domain is found at 472 to 600 (CDSYCKASKG…KFQQREKKEL (129 aa)). The short motif at 530-532 (RGD) is the Cell attachment site element.

As to quaternary structure, binds to its receptors; DCC, UNC5A, UNC5B, UNC5C and probably UNC5D. Binds to its receptor; DSCAM. Interacts with APP.

The protein localises to the secreted. It is found in the cytoplasm. Its function is as follows. Netrins control guidance of CNS commissural axons and peripheral motor axons. Its association with either DCC or some UNC5 receptors will lead to axon attraction or repulsion, respectively. Binding to UNC5C might cause dissociation of UNC5C from polymerized TUBB3 in microtubules and thereby lead to increased microtubule dynamics and axon repulsion. Involved in dorsal root ganglion axon projection towards the spinal cord. It also serves as a survival factor via its association with its receptors which prevent the initiation of apoptosis. Involved in colorectal tumorigenesis by regulating apoptosis. This chain is Netrin-1 (NTN1), found in Sus scrofa (Pig).